The following is a 351-amino-acid chain: Peroxisomal membrane protein PEX14 (351 aa).

Positions 54–75 are disordered; the sequence is KARTGTVQASPSQQSVVPPRPP. Residues 60-70 are compositionally biased toward low complexity; that stretch reads VQASPSQQSVV. The SH3-binding signature appears at 83–91; it reads APPLPERDW. Positions 243–351 are disordered; the sequence is APQLSTPPSE…RGIPAWQLNA (109 aa). A compositionally biased stretch (polar residues) spans 245-258; it reads QLSTPPSESTSRQS. A compositionally biased stretch (basic and acidic residues) spans 283-293; it reads VLSREKDKDVN. Residues 294-303 are compositionally biased toward polar residues; sequence SDSIAQYEQR. A compositionally biased stretch (low complexity) spans 320–334; sequence SASNGGSSTTSGVAG.

This sequence belongs to the peroxin-14 family. In terms of assembly, interacts with PEX13 (via SH3 domain); forming the PEX13-PEX14 docking complex. Interacts with PEX5 (via WxxxF/Y motifs).

The protein resides in the peroxisome membrane. In terms of biological role, component of the PEX13-PEX14 docking complex, a translocon channel that specifically mediates the import of peroxisomal cargo proteins bound to PEX5 receptor. The PEX13-PEX14 docking complex forms a large import pore which can be opened to a diameter of about 9 nm. Mechanistically, PEX5 receptor along with cargo proteins associates with the PEX14 subunit of the PEX13-PEX14 docking complex in the cytosol, leading to the insertion of the receptor into the organelle membrane with the concomitant translocation of the cargo into the peroxisome matrix. The chain is Peroxisomal membrane protein PEX14 from Pichia angusta (Yeast).